We begin with the raw amino-acid sequence, 404 residues long: Formate-dependent phosphoribosylglycinamide formyltransferase (404 aa).

N(1)-(5-phospho-beta-D-ribosyl)glycinamide-binding positions include 25–26 (EL) and Glu85. ATP contacts are provided by residues Arg118, Lys159, 164 to 169 (SSGKGQ), 199 to 202 (EGFI), and Glu207. An ATP-grasp domain is found at 123 to 318 (RLAAEELGLP…EFELHARAIL (196 aa)). Mg(2+) is bound by residues Glu277 and Glu289. Residues Asp296, Lys365, and 372–373 (RR) contribute to the N(1)-(5-phospho-beta-D-ribosyl)glycinamide site.

This sequence belongs to the PurK/PurT family. In terms of assembly, homodimer.

It catalyses the reaction N(1)-(5-phospho-beta-D-ribosyl)glycinamide + formate + ATP = N(2)-formyl-N(1)-(5-phospho-beta-D-ribosyl)glycinamide + ADP + phosphate + H(+). The protein operates within purine metabolism; IMP biosynthesis via de novo pathway; N(2)-formyl-N(1)-(5-phospho-D-ribosyl)glycinamide from N(1)-(5-phospho-D-ribosyl)glycinamide (formate route): step 1/1. Involved in the de novo purine biosynthesis. Catalyzes the transfer of formate to 5-phospho-ribosyl-glycinamide (GAR), producing 5-phospho-ribosyl-N-formylglycinamide (FGAR). Formate is provided by PurU via hydrolysis of 10-formyl-tetrahydrofolate. The polypeptide is Formate-dependent phosphoribosylglycinamide formyltransferase (Burkholderia mallei (strain NCTC 10247)).